Reading from the N-terminus, the 811-residue chain is Probable inorganic carbon transporter subunit DabA (811 aa).

Zn(2+) is bound by residues Cys-336, Asp-338, His-498, and Cys-513.

It belongs to the inorganic carbon transporter (TC 9.A.2) DabA family. Forms a complex with DabB. Zn(2+) is required as a cofactor.

It localises to the cell inner membrane. Part of an energy-coupled inorganic carbon pump. This is Probable inorganic carbon transporter subunit DabA from Azorhizobium caulinodans (strain ATCC 43989 / DSM 5975 / JCM 20966 / LMG 6465 / NBRC 14845 / NCIMB 13405 / ORS 571).